A 57-amino-acid polypeptide reads, in one-letter code: MAGDQKAKAKMEQAKGKAKAAAGRAVGNERMAAEGQAEKSKGDARQAKEKTKDVFKH.

2 stretches are compositionally biased toward basic and acidic residues: residues 1 to 15 (MAGDQKAKAKMEQAK) and 36 to 57 (QAEKSKGDARQAKEKTKDVFKH). The segment at 1 to 57 (MAGDQKAKAKMEQAKGKAKAAAGRAVGNERMAAEGQAEKSKGDARQAKEKTKDVFKH) is disordered.

The protein belongs to the UPF0337 (CsbD) family.

In Streptomyces avermitilis (strain ATCC 31267 / DSM 46492 / JCM 5070 / NBRC 14893 / NCIMB 12804 / NRRL 8165 / MA-4680), this protein is UPF0337 protein SAV_1088.